Consider the following 295-residue polypeptide: Small ribosomal subunit protein uS2 (295 aa).

This sequence belongs to the universal ribosomal protein uS2 family.

The sequence is that of Small ribosomal subunit protein uS2 from Rickettsia typhi (strain ATCC VR-144 / Wilmington).